The following is a 68-amino-acid chain: MKLNEVKEFVKELRGLSQEELAKRENELKKELFDLRFQAAAGQLEQTARLKEVKKQIARIKTVQSEVK.

Belongs to the universal ribosomal protein uL29 family.

In Streptococcus sanguinis (strain SK36), this protein is Large ribosomal subunit protein uL29.